Reading from the N-terminus, the 188-residue chain is uncharacterized protein (188 aa).

A disordered region spans residues 57–80 (NDDVAPVAEGPKQERRSPSRNIGR).

Belongs to the transposase 25 family.

This is an uncharacterized protein from Sinorhizobium fredii (strain NBRC 101917 / NGR234).